The chain runs to 449 residues: MEEKLSRRRRVVLVPVPAQGHITPMIQLAKALHSKGFSITVVQTKFNYLNPSNDLSDFQFVTIPENLPVSDLKNLGPGRFLIKLANECYVSFKDLLGQLLVNEEEEIACVIYDEFMYFVEVAVKEFKLRNVILSTTSATAFVCRFVMCELYAKDGLAQLKEGGEREVELVPELYPIRYKDLPSSVFASVESSVELFKNTCYKGTASSVIINTVRCLEMSSLEWLQQELEIPVYSIGPLHMVVSAPPTSLLEENESCIEWLNKQKPSSVIYISLGSFTLMETKEMLEMAYGFVSSNQHFLWVIRPGSICGSEISEEELLKKMVITDRGYIVKWAPQKQVLAHSAVGAFWSHCGWNSTLESLGEGVPLICRPFTTDQKGNARYLECVWKVGIQVEGELERGAIERAVKRLMVDEEGEEMKRRALSLKEKLKASVLAQGSSHKSLDDFIKTL.

UDP-alpha-D-glucose is bound by residues serine 275, 333 to 335, 350 to 358, and 372 to 375; these read APQ, HCGWNSTLE, and TTDQ.

The protein belongs to the UDP-glycosyltransferase family.

The polypeptide is UDP-glycosyltransferase 76E7 (UGT76E7) (Arabidopsis thaliana (Mouse-ear cress)).